Here is a 237-residue protein sequence, read N- to C-terminus: tRNA1(Val) (adenine(37)-N6)-methyltransferase (237 aa).

It belongs to the methyltransferase superfamily. tRNA (adenine-N(6)-)-methyltransferase family.

It localises to the cytoplasm. The enzyme catalyses adenosine(37) in tRNA1(Val) + S-adenosyl-L-methionine = N(6)-methyladenosine(37) in tRNA1(Val) + S-adenosyl-L-homocysteine + H(+). In terms of biological role, specifically methylates the adenine in position 37 of tRNA(1)(Val) (anticodon cmo5UAC). The sequence is that of tRNA1(Val) (adenine(37)-N6)-methyltransferase from Parabacteroides distasonis (strain ATCC 8503 / DSM 20701 / CIP 104284 / JCM 5825 / NCTC 11152).